The chain runs to 137 residues: 2-iminobutanoate/2-iminopropanoate deaminase (137 aa).

An N-acetylserine modification is found at Ser-2. N6-succinyllysine occurs at positions 13, 60, and 67. Thr-74 carries the phosphothreonine modification.

The protein belongs to the RutC family. As to quaternary structure, homotrimer. Interacts with YTHDF2. Liver and kidney.

The protein resides in the cytoplasm. It localises to the nucleus. Its subcellular location is the peroxisome. It is found in the mitochondrion. It catalyses the reaction 2-iminobutanoate + H2O = 2-oxobutanoate + NH4(+). The enzyme catalyses 2-iminopropanoate + H2O = pyruvate + NH4(+). In terms of biological role, catalyzes the hydrolytic deamination of enamine/imine intermediates that form during the course of normal metabolism. May facilitate the release of ammonia from these potentially toxic reactive metabolites, reducing their impact on cellular components. It may act on enamine/imine intermediates formed by several types of pyridoxal-5'-phosphate-dependent dehydratases including L-threonine dehydratase. Also promotes endoribonucleolytic cleavage of some transcripts by promoting recruitment of the ribonuclease P/MRP complex. Acts by bridging YTHDF2 and the ribonuclease P/MRP complex. RIDA/HRSP12 binds to N6-methyladenosine (m6A)-containing mRNAs containing a 5'-GGUUC-3' motif: cooperative binding of RIDA/HRSP12 and YTHDF2 to such transcripts lead to recruitment of the ribonuclease P/MRP complex and subsequent endoribonucleolytic cleavage. The chain is 2-iminobutanoate/2-iminopropanoate deaminase from Rattus norvegicus (Rat).